The chain runs to 223 residues: Adenylate kinase 4, mitochondrial (223 aa).

15–20 contributes to the a ribonucleoside 5'-triphosphate binding site; sequence GSGKGT. Residues 35–64 form an NMP region; that stretch reads SSGHLLRENLKTGTEVGDVAKQYLEKGLLV. Residues S36 and R41 each contribute to the AMP site. An N6-succinyllysine modification is found at K60. AMP is bound by residues 62–64, 89–92, and Q96; these read LLV and GFPR. The interval 125–162 is LID; that stretch reads RRWIHPSSGRVYNLDFNPPQVQGIDDITGEPLVQQEDD. Residues R126 and 135-136 each bind a ribonucleoside 5'-triphosphate; that span reads VY. R170 is an AMP binding site. K175 bears the N6-acetyllysine mark. Residues K179 and K186 each carry the N6-acetyllysine; alternate modification. N6-succinyllysine; alternate is present on residues K179 and K186. An a ribonucleoside 5'-triphosphate-binding site is contributed by T199.

The protein belongs to the adenylate kinase family. AK3 subfamily. In terms of assembly, monomer. Interacts with SLC25A5/ANT2. As to expression, expressed in kidney, liver, stomach, brain, spinal cord, heart, ovary, oviduct, colon, jejunum, ileum and testis (at protein level). In the brain, expressed in the pyramidal cells of the cerebrum and glial cells in the cerebellum (at protein level). In the heart, expressed by myocytes (at protein level). In the kidney, expressed in the proximal to distal tubule in the cortex and the outer and inner zones of the medulla (at protein level). In the stomach, expressed in stratified squamous epithelia in the forestomach and in the gastric pit and mucus producing cells of the glandular stomach (at protein level). Expressed in epithelial cells of the jejunum, ileum, and colon (at protein level). In the testis, expressed by spermatocytes (at protein level). In the ovaries, expressed by oocytes, follicular epithelial cells, and corpus luteum cells (at protein level). In the oviduct, expressed in the epithelia of the isthmus and the ciliated cells of the ampulla (at protein level). Expressed in the pyramidal cells in the hippocampus.

The protein localises to the mitochondrion matrix. The catalysed reaction is a ribonucleoside 5'-phosphate + ATP = a ribonucleoside 5'-diphosphate + ADP. It catalyses the reaction AMP + ATP = 2 ADP. The enzyme catalyses GTP + AMP = GDP + ADP. It carries out the reaction CMP + ATP = CDP + ADP. The catalysed reaction is GTP + CMP = CDP + GDP. It catalyses the reaction dAMP + ATP = dADP + ADP. The enzyme catalyses dCMP + ATP = dCDP + ADP. It carries out the reaction a 2'-deoxyribonucleoside 5'-diphosphate + ATP = a 2'-deoxyribonucleoside 5'-triphosphate + ADP. The catalysed reaction is a ribonucleoside 5'-diphosphate + ATP = a ribonucleoside 5'-triphosphate + ADP. It catalyses the reaction GDP + ATP = GTP + ADP. The enzyme catalyses CDP + GTP = CTP + GDP. It carries out the reaction CDP + ATP = CTP + ADP. The catalysed reaction is UDP + ATP = UTP + ADP. It catalyses the reaction GTP + UDP = UTP + GDP. The enzyme catalyses dADP + GTP = dATP + GDP. It carries out the reaction dCDP + GTP = dCTP + GDP. The catalysed reaction is dCDP + ATP = dCTP + ADP. It catalyses the reaction dGDP + ATP = dGTP + ADP. The enzyme catalyses dTDP + GTP = dTTP + GDP. It carries out the reaction dTDP + ATP = dTTP + ADP. Functionally, broad-specificity mitochondrial nucleoside phosphate kinase involved in cellular nucleotide homeostasis by catalyzing nucleoside-phosphate interconversions. Similar to other adenylate kinases, preferentially catalyzes the phosphorylation of the nucleoside monophosphate AMP with ATP as phosphate donor to produce ADP. Phosphorylates only AMP when using GTP as phosphate donor. In vitro, can also catalyze the phosphorylation of CMP, dAMP and dCMP and use GTP as an alternate phosphate donor. Moreover, exhibits a diphosphate kinase activity, producing ATP, CTP, GTP, UTP, TTP, dATP, dCTP and dGTP from the corresponding diphosphate substrates with either ATP or GTP as phosphate donors. Plays a role in controlling cellular ATP levels by regulating phosphorylation and activation of the energy sensor protein kinase AMPK. Plays a protective role in the cellular response to oxidative stress. The sequence is that of Adenylate kinase 4, mitochondrial from Mus musculus (Mouse).